The sequence spans 427 residues: Glutamate-1-semialdehyde 2,1-aminomutase (427 aa).

At lysine 265 the chain carries N6-(pyridoxal phosphate)lysine.

Belongs to the class-III pyridoxal-phosphate-dependent aminotransferase family. HemL subfamily. In terms of assembly, homodimer. The cofactor is pyridoxal 5'-phosphate.

The protein resides in the cytoplasm. The catalysed reaction is (S)-4-amino-5-oxopentanoate = 5-aminolevulinate. Its pathway is porphyrin-containing compound metabolism; protoporphyrin-IX biosynthesis; 5-aminolevulinate from L-glutamyl-tRNA(Glu): step 2/2. The sequence is that of Glutamate-1-semialdehyde 2,1-aminomutase from Pseudomonas putida (strain GB-1).